We begin with the raw amino-acid sequence, 20 residues long: FLGGLMKAFPAIICAVTKKC.

A disulfide bridge connects residues C14 and C20.

As to expression, expressed by the skin glands.

It localises to the secreted. In terms of biological role, antibacterial activity against Gram-positive bacterium S.aureus and Gram-negative bacterium E.coli. Has activity against C.albicans. The sequence is that of Ranalexin-1Cb from Lithobates clamitans (Green frog).